The chain runs to 101 residues: Small ribosomal subunit protein uS14 (101 aa).

The protein belongs to the universal ribosomal protein uS14 family. As to quaternary structure, part of the 30S ribosomal subunit. Contacts proteins S3 and S10.

Functionally, binds 16S rRNA, required for the assembly of 30S particles and may also be responsible for determining the conformation of the 16S rRNA at the A site. This is Small ribosomal subunit protein uS14 from Sphingopyxis alaskensis (strain DSM 13593 / LMG 18877 / RB2256) (Sphingomonas alaskensis).